The following is a 325-amino-acid chain: MKVHLDRTSSGFCIGVQGTIHLAEEKLEELDSKLYCLGDIVHNEVEVKRLEDLGLITIDNEEYNKLKHAHVLVRAHGEPPSTYKRADSNELSITDSTCPVVSKLQRTARLLFELGFQIIIYGKKTHPEVIGINGQCADQAVIIKHADLSVPEETDPIDFTRQTALISQTTMDVPGFYILKKNLESLFADRTDAAEQKSTHSWKTIRDIDITAEMTGICPLPDLVYKDTICRQVSSRNAKLHDFAAANDIIIFVAGKKSSNGQVLFNICRESNPRSYFIADQTGLQDEWFYDNGRPVGSVGVCGATSTPMWLLENVAHSIEQTYAG.

[4Fe-4S] cluster is bound at residue cysteine 13. Positions 42 and 76 each coordinate (2E)-4-hydroxy-3-methylbut-2-enyl diphosphate. The dimethylallyl diphosphate site is built by histidine 42 and histidine 76. Residues histidine 42 and histidine 76 each coordinate isopentenyl diphosphate. Cysteine 98 contacts [4Fe-4S] cluster. Histidine 126 serves as a coordination point for (2E)-4-hydroxy-3-methylbut-2-enyl diphosphate. Histidine 126 is a dimethylallyl diphosphate binding site. Histidine 126 provides a ligand contact to isopentenyl diphosphate. Glutamate 128 (proton donor) is an active-site residue. Residue threonine 169 coordinates (2E)-4-hydroxy-3-methylbut-2-enyl diphosphate. Residue cysteine 230 participates in [4Fe-4S] cluster binding. Residues serine 258, serine 259, asparagine 260, and serine 306 each coordinate (2E)-4-hydroxy-3-methylbut-2-enyl diphosphate. 4 residues coordinate dimethylallyl diphosphate: serine 258, serine 259, asparagine 260, and serine 306. Isopentenyl diphosphate is bound by residues serine 258, serine 259, asparagine 260, and serine 306.

It belongs to the IspH family. The cofactor is [4Fe-4S] cluster.

The catalysed reaction is isopentenyl diphosphate + 2 oxidized [2Fe-2S]-[ferredoxin] + H2O = (2E)-4-hydroxy-3-methylbut-2-enyl diphosphate + 2 reduced [2Fe-2S]-[ferredoxin] + 2 H(+). It carries out the reaction dimethylallyl diphosphate + 2 oxidized [2Fe-2S]-[ferredoxin] + H2O = (2E)-4-hydroxy-3-methylbut-2-enyl diphosphate + 2 reduced [2Fe-2S]-[ferredoxin] + 2 H(+). It functions in the pathway isoprenoid biosynthesis; dimethylallyl diphosphate biosynthesis; dimethylallyl diphosphate from (2E)-4-hydroxy-3-methylbutenyl diphosphate: step 1/1. Its pathway is isoprenoid biosynthesis; isopentenyl diphosphate biosynthesis via DXP pathway; isopentenyl diphosphate from 1-deoxy-D-xylulose 5-phosphate: step 6/6. Its function is as follows. Catalyzes the conversion of 1-hydroxy-2-methyl-2-(E)-butenyl 4-diphosphate (HMBPP) into a mixture of isopentenyl diphosphate (IPP) and dimethylallyl diphosphate (DMAPP). Acts in the terminal step of the DOXP/MEP pathway for isoprenoid precursor biosynthesis. This chain is 4-hydroxy-3-methylbut-2-enyl diphosphate reductase, found in Chlorobium phaeobacteroides (strain BS1).